We begin with the raw amino-acid sequence, 451 residues long: MEQQSQLERLGLFDARVPRYTSYPTAPHFTPAVGEPVFRDWIAAIPAGAAISLYMHVPFCRRLCWFCACRTQGTQSDEPVRAYAKALLAELDMLKSALAPGVRLSRLHWGGGTPTLMPAEMMRLVAGAVLDAFPLAEGAEFSVEIDPNEIDEARMDALAEAGLNRASIGVQDFDPEIQKIIGREQSFEVTKRAVDMIRDRGIASLNADILYGLPHQDPHRIAESVQKLLALSPDRVALYGYAHVPWMAKRQVMIPSEALPDPHGRLRLFETARELFLADGYDEIGIDHFARPGDGLARAQKAGLLRRNFQGYTDDRAEVLVGLGASSISRFPQGYAQNAPATGAHLARIRDGRFSTTRGHAFSAEDRWRSRMIEALMCDFEIRAEEFIRDHGFDAESLSRILTPVAAHFGDMVDADASGLRITPRGRPLTRMIARMFDGYDMAASGHSAAI.

Residues 45-278 (IPAGAAISLY…FETARELFLA (234 aa)) form the Radical SAM core domain. Y54 contacts S-adenosyl-L-methionine. Positions 60 and 64 each coordinate [4Fe-4S] cluster. Residue F66 participates in S-adenosyl-L-methionine binding. Residue C67 coordinates [4Fe-4S] cluster. Residues G111, 112–113 (GT), E144, Q171, R183, D208, A242, and I328 contribute to the S-adenosyl-L-methionine site.

This sequence belongs to the anaerobic coproporphyrinogen-III oxidase family. As to quaternary structure, monomer. Requires [4Fe-4S] cluster as cofactor.

It is found in the cytoplasm. The catalysed reaction is coproporphyrinogen III + 2 S-adenosyl-L-methionine = protoporphyrinogen IX + 2 5'-deoxyadenosine + 2 L-methionine + 2 CO2. It functions in the pathway porphyrin-containing compound metabolism; protoporphyrin-IX biosynthesis; protoporphyrinogen-IX from coproporphyrinogen-III (AdoMet route): step 1/1. Functionally, involved in the heme biosynthesis. Catalyzes the anaerobic oxidative decarboxylation of propionate groups of rings A and B of coproporphyrinogen III to yield the vinyl groups in protoporphyrinogen IX. The chain is Oxygen-independent coproporphyrinogen III oxidase (hemN) from Paracoccus denitrificans (strain Pd 1222).